A 91-amino-acid chain; its full sequence is Small ribosomal subunit protein uS19 (91 aa).

Belongs to the universal ribosomal protein uS19 family.

Functionally, protein S19 forms a complex with S13 that binds strongly to the 16S ribosomal RNA. The polypeptide is Small ribosomal subunit protein uS19 (Laribacter hongkongensis (strain HLHK9)).